Reading from the N-terminus, the 256-residue chain is Thiazole synthase (256 aa).

Lysine 96 (schiff-base intermediate with DXP) is an active-site residue. 1-deoxy-D-xylulose 5-phosphate contacts are provided by residues glycine 157, 184–185 (AG), and 206–207 (NT).

The protein belongs to the ThiG family. Homotetramer. Forms heterodimers with either ThiH or ThiS.

Its subcellular location is the cytoplasm. It carries out the reaction [ThiS sulfur-carrier protein]-C-terminal-Gly-aminoethanethioate + 2-iminoacetate + 1-deoxy-D-xylulose 5-phosphate = [ThiS sulfur-carrier protein]-C-terminal Gly-Gly + 2-[(2R,5Z)-2-carboxy-4-methylthiazol-5(2H)-ylidene]ethyl phosphate + 2 H2O + H(+). Its pathway is cofactor biosynthesis; thiamine diphosphate biosynthesis. In terms of biological role, catalyzes the rearrangement of 1-deoxy-D-xylulose 5-phosphate (DXP) to produce the thiazole phosphate moiety of thiamine. Sulfur is provided by the thiocarboxylate moiety of the carrier protein ThiS. In vitro, sulfur can be provided by H(2)S. This chain is Thiazole synthase, found in Brucella anthropi (strain ATCC 49188 / DSM 6882 / CCUG 24695 / JCM 21032 / LMG 3331 / NBRC 15819 / NCTC 12168 / Alc 37) (Ochrobactrum anthropi).